The primary structure comprises 831 residues: Maltodextrin phosphorylase (831 aa).

Residue Lys-592 is modified to N6-(pyridoxal phosphate)lysine.

It belongs to the glycogen phosphorylase family. As to quaternary structure, trimer (at 25 degrees Celsius). Requires pyridoxal 5'-phosphate as cofactor.

It carries out the reaction [(1-&gt;4)-alpha-D-glucosyl](n) + phosphate = [(1-&gt;4)-alpha-D-glucosyl](n-1) + alpha-D-glucose 1-phosphate. Functionally, phosphorylase is an important allosteric enzyme in carbohydrate metabolism. Catalyzes the phospholytic cleavage of maltodextrins with a minimal chain length of five glucose residues to yield glucose-1-phosphate. Low activity with tetraose and no activity with triose and maltose. Long maltodextrins (8 to 15 glucose units), amylose and starch are not as good substrates as maltoheptaose. The sequence is that of Maltodextrin phosphorylase (malP) from Thermococcus litoralis (strain ATCC 51850 / DSM 5473 / JCM 8560 / NS-C).